Consider the following 493-residue polypeptide: Chitobiosyldiphosphodolichol beta-mannosyltransferase (493 aa).

Over M1 to K71 the chain is Lumenal. The chain crosses the membrane as a helical span at residues I72 to I92. The Cytoplasmic segment spans residues I93–T109. Residues I110–I130 constitute an intramembrane region (helical). At R131 to D493 the chain is on the cytoplasmic side. Residues F462–D493 are disordered. Residues S465–D493 show a composition bias toward low complexity.

It belongs to the glycosyltransferase group 1 family. Glycosyltransferase 33 subfamily.

The protein localises to the endoplasmic reticulum membrane. The catalysed reaction is an N,N'-diacetylchitobiosyl-diphospho-di-trans,poly-cis-dolichol + GDP-alpha-D-mannose = a beta-D-Man-(1-&gt;4)-beta-D-GlcNAc-(1-&gt;4)-alpha-D-GlcNAc-diphospho-di-trans,poly-cis-dolichol + GDP + H(+). It functions in the pathway protein modification; protein glycosylation. Its function is as follows. Participates in the formation of the lipid-linked precursor oligosaccharide for N-glycosylation. Involved in assembling the dolichol-pyrophosphate-GlcNAc(2)-Man(5) intermediate on the cytoplasmic surface of the ER. The chain is Chitobiosyldiphosphodolichol beta-mannosyltransferase (alg1) from Dictyostelium discoideum (Social amoeba).